A 165-amino-acid chain; its full sequence is Transcriptional repressor NrdR (165 aa).

A zinc finger lies at cysteine 3–cysteine 34. Positions leucine 46–aspartate 136 constitute an ATP-cone domain.

Belongs to the NrdR family. Zn(2+) is required as a cofactor.

Negatively regulates transcription of bacterial ribonucleotide reductase nrd genes and operons by binding to NrdR-boxes. The sequence is that of Transcriptional repressor NrdR from Rhodococcus erythropolis (strain PR4 / NBRC 100887).